The primary structure comprises 235 residues: Small ribosomal subunit protein uS2 (235 aa).

Belongs to the universal ribosomal protein uS2 family.

This Geobacillus sp. (strain WCH70) protein is Small ribosomal subunit protein uS2.